The chain runs to 336 residues: 3-isopropylmalate dehydrogenase (336 aa).

The substrate site is built by R87, R97, R121, and D211. The Mg(2+) site is built by D211, D235, and D239. Residue 271–283 coordinates NAD(+); it reads GSAPDIAGQGIAD.

Belongs to the isocitrate and isopropylmalate dehydrogenases family. LeuB type 2 subfamily. As to quaternary structure, homodimer. The cofactor is Mg(2+). It depends on Mn(2+) as a cofactor.

It is found in the cytoplasm. It carries out the reaction (2R,3S)-3-isopropylmalate + NAD(+) = 4-methyl-2-oxopentanoate + CO2 + NADH. It functions in the pathway amino-acid biosynthesis; L-leucine biosynthesis; L-leucine from 3-methyl-2-oxobutanoate: step 3/4. Catalyzes the oxidation of 3-carboxy-2-hydroxy-4-methylpentanoate (3-isopropylmalate) to 3-carboxy-4-methyl-2-oxopentanoate. The product decarboxylates to 4-methyl-2 oxopentanoate. This chain is 3-isopropylmalate dehydrogenase, found in Rhodococcus jostii (strain RHA1).